Consider the following 160-residue polypeptide: MAQRTEKEETEFKVLETLTTTTTTLCTNNCGVTANPATNNMCQKCFNASLVSAAAGVVESGSILKRSARSVNLRSSPAKVVIRPREIDAVKKRDQQIVNRCSGCRKKVGLTGFRCRCGELFCSEHRYSDRHDCSYDYKTAGREAIARENPVVKAAKMVKV.

An A20-type zinc finger spans residues 20-54 (TTTTTLCTNNCGVTANPATNNMCQKCFNASLVSAA). Zn(2+)-binding residues include C26, C30, C42, C45, C101, C104, C115, C117, C122, H125, H131, and C133. The AN1-type zinc-finger motif lies at 95-141 (QQIVNRCSGCRKKVGLTGFRCRCGELFCSEHRYSDRHDCSYDYKTAG).

In terms of biological role, may be involved in environmental stress response. This chain is Zinc finger A20 and AN1 domain-containing stress-associated protein 5 (SAP5), found in Arabidopsis thaliana (Mouse-ear cress).